The sequence spans 241 residues: Triosephosphate isomerase (241 aa).

9–11 lines the substrate pocket; that stretch reads NWK. The Electrophile role is filled by histidine 96. Glutamate 165 acts as the Proton acceptor in catalysis. Substrate contacts are provided by residues glycine 171, serine 204, and 225-226; that span reads GG.

This sequence belongs to the triosephosphate isomerase family. As to quaternary structure, homodimer.

It localises to the cytoplasm. It catalyses the reaction D-glyceraldehyde 3-phosphate = dihydroxyacetone phosphate. The protein operates within carbohydrate biosynthesis; gluconeogenesis. It participates in carbohydrate degradation; glycolysis; D-glyceraldehyde 3-phosphate from glycerone phosphate: step 1/1. In terms of biological role, involved in the gluconeogenesis. Catalyzes stereospecifically the conversion of dihydroxyacetone phosphate (DHAP) to D-glyceraldehyde-3-phosphate (G3P). This Nostoc sp. (strain PCC 7120 / SAG 25.82 / UTEX 2576) protein is Triosephosphate isomerase.